The sequence spans 43 residues: Protein PsbN (43 aa).

Residues 7–27 (LIVAIAAVTICITAFAIYTAF) form a helical membrane-spanning segment.

This sequence belongs to the PsbN family.

Its subcellular location is the cellular thylakoid membrane. Functionally, may play a role in photosystem I and II biogenesis. This chain is Protein PsbN, found in Synechococcus sp. (strain JA-2-3B'a(2-13)) (Cyanobacteria bacterium Yellowstone B-Prime).